Consider the following 301-residue polypeptide: Chitin deacetylase 1 (301 aa).

A signal peptide spans 1 to 24 (MKIFNTIQSVLFAAFFLKQGNCLA). Asn26, Asn50, and Asn68 each carry an N-linked (GlcNAc...) asparagine glycan. Residues Cys107 and Cys290 are joined by a disulfide bond. Residues 108 to 288 (FKLSQTFDDG…LIGSDQLTIA (181 aa)) form the NodB homology domain. Asp115 (proton acceptor) is an active-site residue. Asp115 contributes to the acetate binding site. Residues Asp116, His162, and His166 each contribute to the Co(2+) site. Residue Asn189 is glycosylated (N-linked (GlcNAc...) asparagine). Tyr203 contacts acetate. His263 serves as the catalytic Proton donor.

Belongs to the polysaccharide deacetylase family. Requires Co(2+) as cofactor.

Its subcellular location is the prospore. It catalyses the reaction [(1-&gt;4)-N-acetyl-beta-D-glucosaminyl](n) + n H2O = chitosan + n acetate. Functionally, hydrolyzes the N-acetamido groups of N-acetyl-D-glucosamine residues in chitin to form chitosan and acetate. Chitosan is a component of the spore wall. The protein is Chitin deacetylase 1 of Saccharomyces cerevisiae (strain ATCC 204508 / S288c) (Baker's yeast).